A 449-amino-acid chain; its full sequence is GTPase Der (449 aa).

2 consecutive EngA-type G domains span residues 3–167 (AVIA…PTSE) and 178–351 (PRIA…IDSR). GTP-binding positions include 9–16 (GRPNVGKS), 56–60 (DTGGF), 119–122 (NKMD), 184–191 (GRPNVGKS), 231–235 (DTAGM), and 296–299 (NKWD). In terms of domain architecture, KH-like spans 352–436 (RHFSTAELNR…PLRLVFRQGE (85 aa)).

This sequence belongs to the TRAFAC class TrmE-Era-EngA-EngB-Septin-like GTPase superfamily. EngA (Der) GTPase family. Associates with the 50S ribosomal subunit.

Its function is as follows. GTPase that plays an essential role in the late steps of ribosome biogenesis. In Acidithiobacillus ferrooxidans (strain ATCC 23270 / DSM 14882 / CIP 104768 / NCIMB 8455) (Ferrobacillus ferrooxidans (strain ATCC 23270)), this protein is GTPase Der.